Here is a 512-residue protein sequence, read N- to C-terminus: Oryzalexin E synthase (512 aa).

A helical membrane pass occupies residues 6–26; it reads SELWMTAVATCMSLLLYLTIL. Position 452 (C452) interacts with heme.

It belongs to the cytochrome P450 family. It depends on heme as a cofactor.

The protein resides in the membrane. The catalysed reaction is ent-sandaracopimaradien-3beta-ol + reduced [NADPH--hemoprotein reductase] + O2 = oryzalexin E + oxidized [NADPH--hemoprotein reductase] + H2O + H(+). In terms of biological role, enzyme of the diterpenoid metabolism involved in the biosynthesis of the oryzalexin class of phytoalexins. Can use ent-sandaracopimaradien and syn-stemodene as substrates, but no activity with syn-stemoden-19-oic acid. Hydroxylates 3-alpha-hydroxy-ent-sandaracopimaradiene at C-9-beta, resulting in a 3-alpha,9-beta-diol corresponding to oryzalexins E. This Oryza sativa subsp. japonica (Rice) protein is Oryzalexin E synthase.